A 300-amino-acid chain; its full sequence is N-carbamoylputrescine amidase (300 aa).

Residues 8 to 266 form the CN hydrolase domain; that stretch reads VTVAALQFAC…EAVLVAQFDL (259 aa). Glu-47 serves as the catalytic Proton acceptor. The active-site Proton donor is the Lys-120. Catalysis depends on Cys-157, which acts as the Nucleophile.

This sequence belongs to the carbon-nitrogen hydrolase superfamily. Homooctamer.

The enzyme catalyses N-carbamoylputrescine + H2O + 2 H(+) = putrescine + NH4(+) + CO2. It participates in amine and polyamine biosynthesis; putrescine biosynthesis via agmatine pathway; putrescine from N-carbamoylputrescine (amidase route): step 1/1. Involved in polyamine biosynthesis. In Solanum tuberosum (Potato), this protein is N-carbamoylputrescine amidase (CPA).